The sequence spans 618 residues: ADP,ATP carrier protein 2, chloroplastic (618 aa).

Residues 1-76 (MEGLIQTRGI…KERSRGFICK (76 aa)) constitute a chloroplast transit peptide. An N-acetylalanine modification is found at A77. 11 helical membrane-spanning segments follow: residues 110–130 (LKKI…YTIL), 148–168 (IIPF…MLLY), 179–199 (ALFY…GFVM), 237–257 (LFYV…FWGF), 270–289 (FYPL…GRTV), 312–332 (AMMS…WWVN), 368–388 (LATL…TWKS), 401–421 (SAFM…MMLL), 441–461 (VLLL…PFAP), 464–484 (AKLG…QNIF), and 542–562 (LANS…AWLA). The interval 586 to 618 (RASSVKIPVVSQEDAPSGETTSQLSEKSTPTGI) is disordered. Polar residues predominate over residues 603–618 (GETTSQLSEKSTPTGI).

It belongs to the ADP/ATP translocase tlc (TC 2.A.12.2) family.

It localises to the plastid. The protein localises to the chloroplast membrane. The protein is ADP,ATP carrier protein 2, chloroplastic (AATP2) of Arabidopsis thaliana (Mouse-ear cress).